A 298-amino-acid polypeptide reads, in one-letter code: Acetylglutamate kinase (298 aa).

Residues 69–70 (GG), Arg91, and Asn196 each bind substrate.

It belongs to the acetylglutamate kinase family. ArgB subfamily.

It is found in the cytoplasm. The enzyme catalyses N-acetyl-L-glutamate + ATP = N-acetyl-L-glutamyl 5-phosphate + ADP. It participates in amino-acid biosynthesis; L-arginine biosynthesis; N(2)-acetyl-L-ornithine from L-glutamate: step 2/4. Its function is as follows. Catalyzes the ATP-dependent phosphorylation of N-acetyl-L-glutamate. This is Acetylglutamate kinase from Rhodopseudomonas palustris (strain TIE-1).